Reading from the N-terminus, the 417-residue chain is Serine hydroxymethyltransferase (417 aa).

Residues L112 and 116-118 (GHL) contribute to the (6S)-5,6,7,8-tetrahydrofolate site. An N6-(pyridoxal phosphate)lysine modification is found at K221. E247 serves as a coordination point for (6S)-5,6,7,8-tetrahydrofolate.

Belongs to the SHMT family. As to quaternary structure, homodimer. It depends on pyridoxal 5'-phosphate as a cofactor.

Its subcellular location is the cytoplasm. The enzyme catalyses (6R)-5,10-methylene-5,6,7,8-tetrahydrofolate + glycine + H2O = (6S)-5,6,7,8-tetrahydrofolate + L-serine. Its pathway is one-carbon metabolism; tetrahydrofolate interconversion. The protein operates within amino-acid biosynthesis; glycine biosynthesis; glycine from L-serine: step 1/1. Functionally, catalyzes the reversible interconversion of serine and glycine with tetrahydrofolate (THF) serving as the one-carbon carrier. This reaction serves as the major source of one-carbon groups required for the biosynthesis of purines, thymidylate, methionine, and other important biomolecules. Also exhibits THF-independent aldolase activity toward beta-hydroxyamino acids, producing glycine and aldehydes, via a retro-aldol mechanism. In Borrelia turicatae (strain 91E135), this protein is Serine hydroxymethyltransferase.